The chain runs to 367 residues: 2-oxoisovalerate dehydrogenase subunit alpha (367 aa).

Residues phenylalanine 66, tyrosine 95, 128–131 (MPEH), and serine 144 contribute to the substrate site. 94–96 (YYR) lines the thiamine diphosphate pocket. Residues 144-146 (SPI), 174-180 (GDGATSE), 204-208 (NFYAI), and histidine 273 each bind thiamine diphosphate. Positions 175, 204, and 206 each coordinate Mg(2+).

It belongs to the BCKDHA family. In terms of assembly, heterotetramer of two alpha and two beta chains. Directly associated with ODBB in the E1 complex. Thiamine diphosphate is required as a cofactor.

It carries out the reaction N(6)-[(R)-lipoyl]-L-lysyl-[protein] + 3-methyl-2-oxobutanoate + H(+) = N(6)-[(R)-S(8)-2-methylpropanoyldihydrolipoyl]-L-lysyl-[protein] + CO2. In terms of biological role, the branched-chain alpha-keto dehydrogenase complex catalyzes the overall conversion of alpha-keto acids to acyl-CoA and CO(2). It contains multiple copies of three enzymatic components: branched-chain alpha-keto acid decarboxylase (E1), lipoamide acyltransferase (E2) and lipoamide dehydrogenase (E3). In Thermus thermophilus (strain ATCC BAA-163 / DSM 7039 / HB27), this protein is 2-oxoisovalerate dehydrogenase subunit alpha.